The chain runs to 233 residues: Probable translation initiation factor, mitochondrial (233 aa).

A mitochondrion-targeting transit peptide spans 1 to 39; that stretch reads MNSYLQFPHRKLFIQFSYSLTSVFRKCQSRTFMNSQFAS.

It belongs to the IF-3 family.

Its subcellular location is the mitochondrion. May be involved in mitochondrial translation initiation. In Schizosaccharomyces pombe (strain 972 / ATCC 24843) (Fission yeast), this protein is Probable translation initiation factor, mitochondrial.